A 93-amino-acid polypeptide reads, in one-letter code: Molybdopterin synthase sulfur carrier subunit (93 aa).

At Gly-93 the chain carries 1-thioglycine; alternate. Position 93 is a glycyl adenylate; alternate (Gly-93).

This sequence belongs to the MoaD family. MOCS2A subfamily. As to quaternary structure, heterotetramer; composed of 2 small (MOCS2A) and 2 large (MOCS2B) subunits. C-terminal thiocarboxylation occurs in 2 steps, it is first acyl-adenylated (-COAMP) via the hesA/moeB/thiF part of UBA4, then thiocarboxylated (-COSH) via the rhodanese domain of UBA4.

The protein localises to the cytoplasm. It participates in cofactor biosynthesis; molybdopterin biosynthesis. Functionally, acts as a sulfur carrier required for molybdopterin biosynthesis. Component of the molybdopterin synthase complex that catalyzes the conversion of precursor Z into molybdopterin by mediating the incorporation of 2 sulfur atoms into precursor Z to generate a dithiolene group. In the complex, serves as sulfur donor by being thiocarboxylated (-COSH) at its C-terminus by UBA4. After interaction with MOCS2B, the sulfur is then transferred to precursor Z to form molybdopterin. The sequence is that of Molybdopterin synthase sulfur carrier subunit from Mycosarcoma maydis (Corn smut fungus).